A 292-amino-acid polypeptide reads, in one-letter code: F-box/LRR-repeat protein 15 (292 aa).

In terms of domain architecture, F-box spans 12–59 (LLDLPWEDVLVTHIFCYLPLRQLVRLQRVSKQFYALIQVYLANCRTFD). LRR repeat units lie at residues 134–155 (HLQY…RSLA), 160–181 (GLRS…CYLS), 186–207 (KMRS…EEVA), 212–233 (ELEQ…RTVA), and 238–259 (KLQS…DPLR).

The protein belongs to the FBXL15 family. In terms of assembly, part of the SCF (SKP1-CUL1-F-box) E3 ubiquitin-protein ligase complex SCF(FBXL15).

Its subcellular location is the cytoplasm. The protein operates within protein modification; protein ubiquitination. Its function is as follows. Substrate recognition component of a SCF (SKP1-CUL1-F-box protein) E3 ubiquitin-protein ligase complex which mediates the ubiquitination and subsequent proteasomal degradation of target proteins. Acts as a positive regulator of the BMP signaling pathway. Required for dorsal/ventral pattern formation. This is F-box/LRR-repeat protein 15 (fbxl15) from Salmo salar (Atlantic salmon).